Consider the following 92-residue polypeptide: Small ribosomal subunit protein uS19 (92 aa).

Belongs to the universal ribosomal protein uS19 family. In terms of assembly, part of the 30S ribosomal subunit.

Protein S19 forms a complex with S13 that binds strongly to the 16S ribosomal RNA. This Bacillus subtilis (strain 168) protein is Small ribosomal subunit protein uS19 (rpsS).